A 20-amino-acid polypeptide reads, in one-letter code: Cathepsin L-like cysteine proteinase (20 aa).

It belongs to the peptidase C1 family.

Its subcellular location is the lysosome. In terms of biological role, thiol protease. The chain is Cathepsin L-like cysteine proteinase from Fasciola hepatica (Liver fluke).